A 262-amino-acid chain; its full sequence is tRNA pseudouridine synthase A (262 aa).

Catalysis depends on aspartate 51, which acts as the Nucleophile. Residue tyrosine 106 coordinates substrate.

This sequence belongs to the tRNA pseudouridine synthase TruA family.

The enzyme catalyses uridine(38/39/40) in tRNA = pseudouridine(38/39/40) in tRNA. Functionally, formation of pseudouridine at positions 38, 39 and 40 in the anticodon stem and loop of transfer RNAs. This is tRNA pseudouridine synthase A from Pyrococcus horikoshii (strain ATCC 700860 / DSM 12428 / JCM 9974 / NBRC 100139 / OT-3).